The chain runs to 183 residues: DELTA-miturgitoxin-Cp1a (183 aa).

The signal sequence occupies residues 1 to 20 (MKFSLFFSVFFLAVLHACLS). A propeptide spanning residues 21-47 (ESEIDLEDEEHFMSSDSFLSEIQDESR) is cleaved from the precursor. The Processing quadruplet motif motif lies at 44 to 47 (DESR). 8 cysteine pairs are disulfide-bonded: Cys51/Cys66, Cys58/Cys75, Cys65/Cys88, Cys77/Cys86, Cys115/Cys130, Cys122/Cys139, Cys129/Cys157, and Cys141/Cys155. Domain repeat units follow at residues 51–77 (CIERNKECTNDRHGCCRGKIFKDKCTC) and 115–141 (CVPKHADCSKRKDDCCKGGIFKYQCKC). The interval 51–141 (CIERNKECTN…GGIFKYQCKC (91 aa)) is 2 X approximate repeats with cysteine pattern C-C-CC-C-C. The predicted alpha-helix stretch occupies residues 164-177 (QAIEGALRIAKKLI). Tryptophan amide is present on Trp181.

This sequence belongs to the neurotoxin 19 (CSTX) family. Double-CSTX subfamily. In terms of processing, cleavage of the propeptide depends on the processing quadruplet motif (XXXR, with at least one of X being E). In terms of tissue distribution, expressed by the venom gland.

Its subcellular location is the secreted. The protein localises to the target cell membrane. Its function is as follows. Spider venom toxin that exhibits cytolytic activity by forming an alpha-helix across the membrane. Lethal to insect larvae. Causes instant paralysis and death in the larvae of the flesh fly (S.carnaria) at doses of 20 ug/g, at doses of less than 10 ug/g causes reversible paralysis. Has cytolytic activity against insect Sf9 cells. Causes stable and irreversible depolarization of fly muscle fibers, leading to contracture at higher toxin concentrations. Destabilizes membranes. The protein is DELTA-miturgitoxin-Cp1a of Cheiracanthium punctorium (Yellow sac spider).